The chain runs to 355 residues: Probable cinnamyl alcohol dehydrogenase (355 aa).

C47 lines the Zn(2+) pocket. S49 contributes to the NADP(+) binding site. Positions 69, 70, 100, 103, 106, 114, and 162 each coordinate Zn(2+). NADP(+) is bound by residues T166, 187–192, 210–215, T250, G274, and 297–299; these read GLGGVG, SSSDKK, and SFI.

It belongs to the zinc-containing alcohol dehydrogenase family. Homodimer. Requires Zn(2+) as cofactor.

The catalysed reaction is (E)-cinnamyl alcohol + NADP(+) = (E)-cinnamaldehyde + NADPH + H(+). It catalyses the reaction (E)-coniferol + NADP(+) = (E)-coniferaldehyde + NADPH + H(+). The enzyme catalyses (E)-sinapyl alcohol + NADP(+) = (E)-sinapaldehyde + NADPH + H(+). It carries out the reaction (E)-4-coumaroyl alcohol + NADP(+) = (E)-4-coumaraldehyde + NADPH + H(+). The catalysed reaction is (E)-caffeyl alcohol + NADP(+) = (E)-caffeyl aldehyde + NADPH + H(+). The protein operates within aromatic compound metabolism; phenylpropanoid biosynthesis. Involved in lignin biosynthesis. Catalyzes the final step specific for the production of lignin monomers. Catalyzes the NADPH-dependent reduction of coniferaldehyde, 5-hydroxyconiferaldehyde, sinapaldehyde, 4-coumaraldehyde and caffeyl aldehyde to their respective alcohols. The chain is Probable cinnamyl alcohol dehydrogenase (CAD1) from Eucalyptus botryoides (Southern mahogany).